The sequence spans 570 residues: Glycine--tRNA ligase (570 aa).

Residues Arg99 and Glu165 each contribute to the substrate site. ATP contacts are provided by residues Arg197 to Glu199, Ile207 to Phe212, Glu324 to Cys325, and Gly443 to Arg446. Phe212 to Glu216 lines the substrate pocket. Glu439 to Gly443 serves as a coordination point for substrate.

The protein belongs to the class-II aminoacyl-tRNA synthetase family.

Its subcellular location is the cytoplasm. It catalyses the reaction tRNA(Gly) + glycine + ATP = glycyl-tRNA(Gly) + AMP + diphosphate. Functionally, catalyzes the attachment of glycine to tRNA(Gly). This chain is Glycine--tRNA ligase, found in Pyrococcus horikoshii (strain ATCC 700860 / DSM 12428 / JCM 9974 / NBRC 100139 / OT-3).